The following is a 649-amino-acid chain: Acetyl-coenzyme A synthetase (649 aa).

CoA contacts are provided by residues 198–201, Thr317, and Asn341; that span reads RRGK. Residues 393-395, 417-422, Asp506, and Arg521 contribute to the ATP site; these read GEP and DTWWQT. Residue Ser529 participates in CoA binding. Residue Arg532 coordinates ATP. The Mg(2+) site is built by Val543, His545, and Val548. At Lys612 the chain carries N6-acetyllysine. A disordered region spans residues 625–649; the sequence is QPVQGDTSTLEDPTVLERLQASPAL.

Belongs to the ATP-dependent AMP-binding enzyme family. It depends on Mg(2+) as a cofactor. Post-translationally, acetylated. Deacetylation by the SIR2-homolog deacetylase activates the enzyme.

The enzyme catalyses acetate + ATP + CoA = acetyl-CoA + AMP + diphosphate. Functionally, catalyzes the conversion of acetate into acetyl-CoA (AcCoA), an essential intermediate at the junction of anabolic and catabolic pathways. AcsA undergoes a two-step reaction. In the first half reaction, AcsA combines acetate with ATP to form acetyl-adenylate (AcAMP) intermediate. In the second half reaction, it can then transfer the acetyl group from AcAMP to the sulfhydryl group of CoA, forming the product AcCoA. This chain is Acetyl-coenzyme A synthetase, found in Deinococcus radiodurans (strain ATCC 13939 / DSM 20539 / JCM 16871 / CCUG 27074 / LMG 4051 / NBRC 15346 / NCIMB 9279 / VKM B-1422 / R1).